The following is a 245-amino-acid chain: Pyridoxine 5'-phosphate synthase (245 aa).

Asparagine 7 lines the 3-amino-2-oxopropyl phosphate pocket. Residue 9–10 (DH) coordinates 1-deoxy-D-xylulose 5-phosphate. 3-amino-2-oxopropyl phosphate is bound at residue arginine 18. Histidine 43 acts as the Proton acceptor in catalysis. Positions 45 and 50 each coordinate 1-deoxy-D-xylulose 5-phosphate. Glutamate 70 acts as the Proton acceptor in catalysis. Threonine 100 serves as a coordination point for 1-deoxy-D-xylulose 5-phosphate. The Proton donor role is filled by histidine 190. 3-amino-2-oxopropyl phosphate is bound by residues glycine 191 and 212–213 (GH).

This sequence belongs to the PNP synthase family. In terms of assembly, homooctamer; tetramer of dimers.

The protein localises to the cytoplasm. It catalyses the reaction 3-amino-2-oxopropyl phosphate + 1-deoxy-D-xylulose 5-phosphate = pyridoxine 5'-phosphate + phosphate + 2 H2O + H(+). The protein operates within cofactor biosynthesis; pyridoxine 5'-phosphate biosynthesis; pyridoxine 5'-phosphate from D-erythrose 4-phosphate: step 5/5. Catalyzes the complicated ring closure reaction between the two acyclic compounds 1-deoxy-D-xylulose-5-phosphate (DXP) and 3-amino-2-oxopropyl phosphate (1-amino-acetone-3-phosphate or AAP) to form pyridoxine 5'-phosphate (PNP) and inorganic phosphate. This Prochlorococcus marinus (strain NATL1A) protein is Pyridoxine 5'-phosphate synthase.